A 314-amino-acid chain; its full sequence is Large ribosomal subunit protein uL10 (314 aa).

Residues 285–314 (GAAAGGAAAEEEKEEEEESDEEGGFGDLFG) form a disordered region. Residues 293-308 (AEEEKEEEEESDEEGG) are compositionally biased toward acidic residues. A Phosphoserine; by CK1 modification is found at serine 303.

This sequence belongs to the universal ribosomal protein uL10 family. In terms of assembly, component of the large ribosomal subunit. P0 forms a pentameric complex by interaction with dimers of P1 and P2. Phosphorylated.

In terms of biological role, ribosomal protein P0 is the functional equivalent of E.coli protein L10. This chain is Large ribosomal subunit protein uL10, found in Podospora anserina (Pleurage anserina).